We begin with the raw amino-acid sequence, 190 residues long: RRP15-like protein (190 aa).

Residues 1–11 (MSTKNRDRLVV) are compositionally biased toward basic and acidic residues. Disordered stretches follow at residues 1–69 (MSTK…TRKE) and 119–190 (QKTM…SDED). Over residues 55-66 (QRKKKKVIKKLT) the composition is skewed to basic residues. Residues 59-84 (KKVIKKLTRKEQSLKHSVKEYRIKLA) adopt a coiled-coil conformation. Basic and acidic residues predominate over residues 119 to 153 (QKTMSDAVKEKMTARDRKEARERFDGKNFDSDKFA). The segment covering 167–190 (GEEEDEQMNIGDDEIDAGNYSDED) has biased composition (acidic residues).

This sequence belongs to the RRP15 family.

The polypeptide is RRP15-like protein (Caenorhabditis briggsae).